The sequence spans 46 residues: Esculentin-1 (46 aa).

A disulfide bond links cysteine 40 and cysteine 46.

In terms of tissue distribution, expressed by the skin glands.

Its subcellular location is the secreted. Antimicrobial peptide. Stimulates insulin release by BRIN-BD11 cells in vitro. This chain is Esculentin-1, found in Pelophylax saharicus (Sahara frog).